The chain runs to 782 residues: Spastin (782 aa).

The interval 1–103 (MVRTKNQSSS…GNAPRGGNSS (103 aa)) is disordered. The Cytoplasmic segment spans residues 1–115 (MVRTKNQSSS…KQNLYVVSFP (115 aa)). The segment at 1 to 212 (MVRTKNQSSS…RAIQPLEMAG (212 aa)) is required for localization to punctate cytoplasmic foci. The span at 8–19 (SSSSSASSSTKS) shows a compositional bias: low complexity. Over residues 25 to 34 (GGTTNRSRSC) the composition is skewed to polar residues. Composition is skewed to low complexity over residues 44–75 (SKSS…GSSP) and 84–93 (TTDADLTPTS). Positions 116 to 136 (IIFLFNVLRSLIYQLFCIFRY) form an intramembrane region, helical. Residues 137 to 782 (LYGASTKVIY…WSQDYGDITI (646 aa)) lie on the Cytoplasmic side of the membrane. Residues 210–782 (MAGNRAGGNY…WSQDYGDITI (573 aa)) are sufficient for interaction with microtubules and microtubule severing. The MIT domain occupies 235–310 (HRRAFEYISK…SMARDRLHFL (76 aa)). The interval 325–479 (KEQQQKKKSP…GSGSGASTPM (155 aa)) is disordered. Over residues 334-343 (PQQQPQQQQQ) the composition is skewed to low complexity. Polar residues-rich tracts occupy residues 408–426 (NKSQ…STSV) and 447–463 (QFSS…RTPI). The tract at residues 465–479 (NNAAGGSGSGASTPM) is required for interaction with microtubules. 547–554 (GPPGNGKT) serves as a coordination point for ATP.

This sequence belongs to the AAA ATPase family. Spastin subfamily. Homohexamer. The homohexamer is stabilized by ATP-binding. The homohexamer may adopt a ring conformation through which microtubules pass prior to being severed. Interacts with microtubules. Interacts with atl; may be involved in microtubule dynamics.

It is found in the membrane. The protein resides in the cytoplasm. It localises to the cytoskeleton. Its subcellular location is the microtubule organizing center. The protein localises to the centrosome. It is found in the chromosome. The protein resides in the lipid droplet. It carries out the reaction n ATP + n H2O + a microtubule = n ADP + n phosphate + (n+1) alpha/beta tubulin heterodimers.. In terms of biological role, ATP-dependent microtubule severing protein. Stimulates microtubule minus-end depolymerization and poleward microtubule flux in the mitotic spindle. Regulates microtubule stability in the neuromuscular junction synapse. Involved in lipid metabolism by regulating the size and distribution of lipid droplets. Involved in axon regeneration by regulating microtubule severing. This chain is Spastin, found in Drosophila grimshawi (Hawaiian fruit fly).